The chain runs to 857 residues: Leucine--tRNA ligase (857 aa).

The 'HIGH' region motif lies at 42-52; that stretch reads PYPSGTLHMGH. A 'KMSKS' region motif is present at residues 616–620; the sequence is KMSKS. An ATP-binding site is contributed by K619.

The protein belongs to the class-I aminoacyl-tRNA synthetase family.

Its subcellular location is the cytoplasm. The catalysed reaction is tRNA(Leu) + L-leucine + ATP = L-leucyl-tRNA(Leu) + AMP + diphosphate. The chain is Leucine--tRNA ligase from Parasynechococcus marenigrum (strain WH8102).